Consider the following 303-residue polypeptide: tRNA dimethylallyltransferase (303 aa).

9–16 lines the ATP pocket; sequence GPTAVGKT. Position 11-16 (11-16) interacts with substrate; sequence TAVGKT. The interaction with substrate tRNA stretch occupies residues 34-37; that stretch reads DSRQ.

This sequence belongs to the IPP transferase family. As to quaternary structure, monomer. Mg(2+) serves as cofactor.

It catalyses the reaction adenosine(37) in tRNA + dimethylallyl diphosphate = N(6)-dimethylallyladenosine(37) in tRNA + diphosphate. Catalyzes the transfer of a dimethylallyl group onto the adenine at position 37 in tRNAs that read codons beginning with uridine, leading to the formation of N6-(dimethylallyl)adenosine (i(6)A). In Petrotoga mobilis (strain DSM 10674 / SJ95), this protein is tRNA dimethylallyltransferase.